The sequence spans 370 residues: Chaperone protein DnaJ (370 aa).

The J domain occupies 4-68 (DYYQVLGVSK…QKRAAYDRFG (65 aa)). The CR-type zinc-finger motif lies at 133 to 211 (GIEKNISFSS…CHGMGRYHKQ (79 aa)). Residues Cys146, Cys149, Cys163, Cys166, Cys185, Cys188, Cys199, and Cys202 each contribute to the Zn(2+) site. CXXCXGXG motif repeat units lie at residues 146–153 (CDTCHGTG), 163–170 (CDACGGVG), 185–192 (CHKCQGNG), and 199–206 (CKKCHGMG).

It belongs to the DnaJ family. In terms of assembly, homodimer. The cofactor is Zn(2+).

The protein localises to the cytoplasm. Its function is as follows. Participates actively in the response to hyperosmotic and heat shock by preventing the aggregation of stress-denatured proteins and by disaggregating proteins, also in an autonomous, DnaK-independent fashion. Unfolded proteins bind initially to DnaJ; upon interaction with the DnaJ-bound protein, DnaK hydrolyzes its bound ATP, resulting in the formation of a stable complex. GrpE releases ADP from DnaK; ATP binding to DnaK triggers the release of the substrate protein, thus completing the reaction cycle. Several rounds of ATP-dependent interactions between DnaJ, DnaK and GrpE are required for fully efficient folding. Also involved, together with DnaK and GrpE, in the DNA replication of plasmids through activation of initiation proteins. The polypeptide is Chaperone protein DnaJ (Rickettsia prowazekii (strain Madrid E)).